The sequence spans 350 residues: Type II restriction enzyme NgoBI (350 aa).

It catalyses the reaction Endonucleolytic cleavage of DNA to give specific double-stranded fragments with terminal 5'-phosphates.. In terms of biological role, a P subtype restriction enzyme that recognizes the double-stranded sequence 5'-RGCGCY-3'; the cleavage site is unknown. The polypeptide is Type II restriction enzyme NgoBI (ngoBIR) (Neisseria gonorrhoeae).